The following is a 133-amino-acid chain: Otoraplin (133 aa).

The first 23 residues, 1-23 (MAKTFYVVVIVLCLGFIHQKAYG), serve as a signal peptide directing secretion. Disulfide bonds link Cys-35-Cys-40 and Cys-58-Cys-132. The SH3 domain occupies 42–115 (YAISFGRAED…PSSLVTELTV (74 aa)).

Belongs to the MIA/OTOR family.

The protein localises to the secreted. The protein is Otoraplin (OTOR) of Aquarana catesbeiana (American bullfrog).